The sequence spans 171 residues: Large ribosomal subunit protein uL10 (171 aa).

This sequence belongs to the universal ribosomal protein uL10 family. As to quaternary structure, part of the ribosomal stalk of the 50S ribosomal subunit. The N-terminus interacts with L11 and the large rRNA to form the base of the stalk. The C-terminus forms an elongated spine to which L12 dimers bind in a sequential fashion forming a multimeric L10(L12)X complex.

In terms of biological role, forms part of the ribosomal stalk, playing a central role in the interaction of the ribosome with GTP-bound translation factors. The protein is Large ribosomal subunit protein uL10 of Maricaulis maris (strain MCS10) (Caulobacter maris).